Reading from the N-terminus, the 1480-residue chain is Nonribosomal peptide synthetase-like enzyme fsqF (1480 aa).

The segment at 31–59 is disordered; the sequence is SPFADEPSIDVPSTHLPVVTPRSKTANDR. The interval 132 to 527 is adenylation domain; it reads DSARATPHAP…VGRTDDQVKY (396 aa). Residues 662 to 741 form the Carrier domain; the sequence is STARTIAREY…SIASLIDANS (80 aa). At serine 700 the chain carries O-(pantetheine 4'-phosphoryl)serine. The span at 739–754 shows a compositional bias: polar residues; it reads ANSSPGRGQPLNTQET. The tract at residues 739–773 is disordered; the sequence is ANSSPGRGQPLNTQETARLPLRSNGPAPSQQALER. Residues 780 to 1003 are NAD-binding domain; it reads LTGASGFLGI…ACVELGFYNG (224 aa). The aminotransferase domain stretch occupies residues 1100–1465; the sequence is NAAGTVVHRE…YNTVAEVQEF (366 aa).

The protein belongs to the NRP synthetase family.

Its pathway is secondary metabolite biosynthesis. In terms of biological role, nonribosomal peptide synthetase-like enzyme; part of the gene cluster that mediates the biosynthesis of the isoquinoline alkaloids fumisoquin A, fumisoquin B and fumisoquin C; as well as small amounts of fumipyrrole as a shunt metabolite. The products of the cluster lead to a brown coloration and are important for growth and conidiation. The nonribosomal peptide synthetase-like protein fsqF, which lacks a canonical condensation domain, is required for addition of a serine-derived dehydroalanine moiety to activated tyrosine but is not essential for the subsequent steps leading to isoquinoline formation. A different enzyme, most likely the ATP-grasp enzyme fsqD, is responsible for activation of tyrosine. Three additional enzymes encoded by the fsq cluster, the N-methyltransferase fsqC, the phenol 2-monooxygenase fsqG and the FAD-dependent oxidase fsqB, catalyze the formation of the isoquinoline ring system in the fumisoquins. FsqB converts the fspF thiolation domain-bound (2S,4S,5S)-2-amino-6-(3,4-dihydroxyphenyl)-4-hydroxy-5-(methylamino)hexanoyl into isoquinoline. The cyclization most likely proceeds via a two-step mechanism, beginning with FAD-dependent oxidation of the methyl group to an iminium species followed by electrophilic attack on the deprotonated phenol. The protein is Nonribosomal peptide synthetase-like enzyme fsqF of Aspergillus fumigatus (strain ATCC MYA-4609 / CBS 101355 / FGSC A1100 / Af293) (Neosartorya fumigata).